The primary structure comprises 103 residues: Urease subunit beta (103 aa).

The protein belongs to the urease beta subunit family. Heterotrimer of UreA (gamma), UreB (beta) and UreC (alpha) subunits. Three heterotrimers associate to form the active enzyme.

The protein resides in the cytoplasm. It catalyses the reaction urea + 2 H2O + H(+) = hydrogencarbonate + 2 NH4(+). It functions in the pathway nitrogen metabolism; urea degradation; CO(2) and NH(3) from urea (urease route): step 1/1. The chain is Urease subunit beta from Mycobacterium marinum (strain ATCC BAA-535 / M).